We begin with the raw amino-acid sequence, 1088 residues long: Serine/threonine-protein kinase 11-interacting protein (1088 aa).

LRR repeat units follow at residues 109–130 (SLRHLELRGVPLHCLHGLRGIY), 132–152 (QLETLICSRSLQALEELLSAC), 164–185 (ALLSANFSYNALTALDSSLRLL), 187–209 (ALRFLNLSHNQVQDCQGFLMDLC), 210–231 (ELHHLDISYNRLHLVPRMGPSG), 233–254 (ALGVLILRGNELRSLHGLEQLR), 255–276 (NLRHLDLAYNLLEGHRELSPLW), and 280–301 (ELRKLYLEGNPLWFHPEHRAAT). Disordered regions lie at residues 335 to 407 (GLSP…SPAG) and 437 to 533 (LEPS…QKEV). The span at 346 to 367 (PVGSTPETSGGPDLSDSLSSGG) shows a compositional bias: low complexity. Residues 375–385 (HKVKSRVRVRR) show a composition bias toward basic residues. 3 positions are modified to phosphoserine: Ser-387, Ser-389, and Ser-392. Residues 447–460 (TPTTSAPSAPPASS) show a composition bias toward low complexity. The residue at position 470 (Ser-470) is a Phosphoserine. Residues 508–529 (EEGEMVEQGEEEAGEEEEEEQD) show a composition bias toward acidic residues. Phosphoserine is present on Ser-599. 2 disordered regions span residues 724–780 (TPNR…SPPP) and 978–1009 (DAAGSPAEPSPPAASGEASEKVPPSGPGPAVR). Positions 733–742 (EQSLAPSPSA) are enriched in polar residues. The span at 750-759 (GHGDHLDRAK) shows a compositional bias: basic and acidic residues. Ser-761, Ser-773, and Ser-777 each carry phosphoserine. Over residues 978-994 (DAAGSPAEPSPPAASGE) the composition is skewed to low complexity.

This sequence belongs to the STK11IP family. As to quaternary structure, found in a ternary complex composed of STK11/LKB1, STK11IP and SMAD4. Interacts with STK11/LKB1 and SMAD4.

The protein resides in the cytoplasm. Functionally, may regulate STK11/LKB1 function by controlling its subcellular localization. This chain is Serine/threonine-protein kinase 11-interacting protein (STK11IP), found in Homo sapiens (Human).